Here is a 193-residue protein sequence, read N- to C-terminus: Superoxide dismutase [Fe] (193 aa).

Fe cation contacts are provided by His-27, His-74, Asp-157, and His-161.

This sequence belongs to the iron/manganese superoxide dismutase family. Homodimer. The cofactor is Fe cation.

It carries out the reaction 2 superoxide + 2 H(+) = H2O2 + O2. In terms of biological role, destroys superoxide anion radicals which are normally produced within the cells and which are toxic to biological systems. The polypeptide is Superoxide dismutase [Fe] (sodB) (Coxiella burnetii (strain RSA 493 / Nine Mile phase I)).